The primary structure comprises 446 residues: CBL-interacting serine/threonine-protein kinase 24 (446 aa).

Positions 11–264 (YEVGRTIGEG…IQGIKKDPWF (254 aa)) constitute a Protein kinase domain. ATP contacts are provided by residues 17-25 (IGEGTFAKV) and K40. The Proton acceptor role is filled by D134. The tract at residues 152–179 (DFGLSALPQEGVELLRTTCGTPNYVAPE) is activation loop. Phosphoserine is present on S156. T168 carries the post-translational modification Phosphothreonine. The region spanning 305-329 (EGPLMMNAFEMITLSQGLNLSALFD) is the NAF domain. Residues 336 to 365 (KRQTRFVSRREPSEIIANIEAVANSMGFKS) form a PPI region.

Belongs to the protein kinase superfamily. CAMK Ser/Thr protein kinase family. SNF1 subfamily. As to quaternary structure, interacts with CBL1, CBL2, CBL4/SOS3, CBL5, CBL9, CBL10 and with the protein phosphatase 2C ABI2. It depends on Mn(2+) as a cofactor. Autophosphorylated.

Its subcellular location is the cytoplasm. It is found in the nucleus. It carries out the reaction L-seryl-[protein] + ATP = O-phospho-L-seryl-[protein] + ADP + H(+). It catalyses the reaction L-threonyl-[protein] + ATP = O-phospho-L-threonyl-[protein] + ADP + H(+). Functionally, involved in the regulatory pathway for the control of intracellular Na(+) and K(+) homeostasis and salt tolerance. Activates the vacuolar H(+)/Ca(2+) antiporter CAX1 and operates in synergy with CBL4/SOS3 to activate the plasma membrane Na(+)/H(+) antiporter SOS1. CIPK serine-threonine protein kinases interact with CBL proteins. Binding of a CBL protein to the regulatory NAF domain of CIPK protein lead to the activation of the kinase in a calcium-dependent manner. Phosphorylates CBL1, CBL4 and CBL10. The chain is CBL-interacting serine/threonine-protein kinase 24 (CIPK24) from Arabidopsis thaliana (Mouse-ear cress).